The chain runs to 348 residues: Phenylalanine--tRNA ligase alpha subunit (348 aa).

Glutamate 268 is a Mg(2+) binding site.

This sequence belongs to the class-II aminoacyl-tRNA synthetase family. Phe-tRNA synthetase alpha subunit type 1 subfamily. Tetramer of two alpha and two beta subunits. The cofactor is Mg(2+).

It localises to the cytoplasm. It carries out the reaction tRNA(Phe) + L-phenylalanine + ATP = L-phenylalanyl-tRNA(Phe) + AMP + diphosphate + H(+). This chain is Phenylalanine--tRNA ligase alpha subunit, found in Bordetella parapertussis (strain 12822 / ATCC BAA-587 / NCTC 13253).